Reading from the N-terminus, the 251-residue chain is Triosephosphate isomerase (251 aa).

Position 9 to 11 (9 to 11) interacts with substrate; the sequence is NWK. Catalysis depends on histidine 94, which acts as the Electrophile. Catalysis depends on glutamate 166, which acts as the Proton acceptor. Residues glycine 172, serine 211, and 232-233 contribute to the substrate site; that span reads GG.

It belongs to the triosephosphate isomerase family. Homodimer.

Its subcellular location is the cytoplasm. It carries out the reaction D-glyceraldehyde 3-phosphate = dihydroxyacetone phosphate. It participates in carbohydrate biosynthesis; gluconeogenesis. The protein operates within carbohydrate degradation; glycolysis; D-glyceraldehyde 3-phosphate from glycerone phosphate: step 1/1. Its function is as follows. Involved in the gluconeogenesis. Catalyzes stereospecifically the conversion of dihydroxyacetone phosphate (DHAP) to D-glyceraldehyde-3-phosphate (G3P). The polypeptide is Triosephosphate isomerase (Xanthomonas campestris pv. campestris (strain 8004)).